A 327-amino-acid chain; its full sequence is Expansin-B7 (327 aa).

Positions 1–30 (MAGRSRRRSFWSVGVAAALLCLLAAHGCSA) are cleaved as a signal peptide. The interval 30–88 (AKHHKPKPTPGGISGNASSSSSNSSTPSIPPPVAPTPTAPTPPIPSPGTGSSNGSSGGG) is disordered. Residues 44-56 (GNASSSSSNSSTP) are compositionally biased toward low complexity. N-linked (GlcNAc...) asparagine glycosylation is found at Asn45 and Asn52. A compositionally biased stretch (pro residues) spans 57–75 (SIPPPVAPTPTAPTPPIPS). A glycan (N-linked (GlcNAc...) asparagine) is linked at Asn82. The Expansin-like EG45 domain occupies 112 to 218 (GGACGFKNVN…RRVPCQYPGL (107 aa)). 3 disulfides stabilise this stretch: Cys115–Cys143, Cys146–Cys213, and Cys151–Cys157. An Expansin-like CBD domain is found at 231-322 (VYMAILVEYE…DWQPNTVYSS (92 aa)). Residue Asn298 is glycosylated (N-linked (GlcNAc...) asparagine).

The protein belongs to the expansin family. Expansin B subfamily.

It is found in the secreted. Its subcellular location is the cell wall. The protein resides in the membrane. Functionally, may cause loosening and extension of plant cell walls by disrupting non-covalent bonding between cellulose microfibrils and matrix glucans. No enzymatic activity has been found. May be required for rapid internodal elongation in deepwater rice during submergence. The polypeptide is Expansin-B7 (EXPB7) (Oryza sativa subsp. japonica (Rice)).